Reading from the N-terminus, the 513-residue chain is Na(+)/H(+) antiporter NhaB (513 aa).

Transmembrane regions (helical) follow at residues 23–43, 52–72, 97–117, 120–140, 144–164, 202–222, 238–258, 303–323, 348–368, 391–411, 447–467, and 475–495; these read LALIIFLIVNPLIFLISPFVA, IFTLAMALKCYPLLPGGLLAI, LLLMFMVAGIYFMKQLLLFIF, LLLSIRSKMLLSLSFCVAAAF, FLDALTVVAVVISVAVGFYGI, LMMHAGVGTALGGVMTMVGEP, FFLRMSPVTVPVLICGLLTCL, AIIGVWLVTALALHLAEVGLI, TESLPFTALLTVFFSVVAVII, LFYIFNGLLSSISDNVFVGTI, ATPNGQAAFLFLLTSALAPLI, and VWMALPYTLVLTLVGLLCVEF.

Belongs to the NhaB Na(+)/H(+) (TC 2.A.34) antiporter family.

It is found in the cell inner membrane. It catalyses the reaction 2 Na(+)(in) + 3 H(+)(out) = 2 Na(+)(out) + 3 H(+)(in). Its function is as follows. Na(+)/H(+) antiporter that extrudes sodium in exchange for external protons. This chain is Na(+)/H(+) antiporter NhaB, found in Shigella boydii serotype 18 (strain CDC 3083-94 / BS512).